The sequence spans 648 residues: Cell surface glycoprotein MUC18 (648 aa).

Positions 1-23 (MGLPKLVCVFLFAACCCCRRAAG) are cleaved as a signal peptide. 2 Ig-like V-type domains span residues 24 to 131 (VPGE…HYVE) and 141 to 244 (PTIQ…KEVT). The Extracellular segment spans residues 24–563 (VPGEEKQPVP…LPQPESKGVV (540 aa)). 5 disulfides stabilise this stretch: Cys-50-Cys-118, Cys-163-Cys-225, Cys-274-Cys-322, Cys-367-Cys-409, and Cys-454-Cys-501. Asn-58 carries an N-linked (GlcNAc...) asparagine glycan. Ig-like C2-type domains lie at 246–332 (PVFY…TTIT), 337–426 (PLEL…QLVS), and 432–512 (SPWM…SNTT). Residues 281 to 304 (QPHFTINKKDPSTGEMEEESTDEN) form a disordered region. Asn-510 is a glycosylation site (N-linked (GlcNAc...) asparagine). Positions 532-549 (TGLSTLTVSPHTRANSTS) are enriched in polar residues. Residues 532–554 (TGLSTLTVSPHTRANSTSTEKKL) form a disordered region. The chain crosses the membrane as a helical span at residues 564-584 (IVAVIVCTLVLAVLGAALYFF). Topologically, residues 585–648 (YKKGKLPCGR…QGEKYIDLRH (64 aa)) are cytoplasmic. Phosphoserine occurs at positions 608 and 616. The disordered stretch occupies residues 625-648 (LLQGSNGDKRAPGDQGEKYIDLRH). Residues 631-648 (GDKRAPGDQGEKYIDLRH) are compositionally biased toward basic and acidic residues.

In terms of tissue distribution, detected in melanoma cell lines.

It is found in the membrane. In terms of biological role, plays a role in cell adhesion, and in cohesion of the endothelial monolayer at intercellular junctions in vascular tissue. Its expression may allow melanoma cells to interact with cellular elements of the vascular system, thereby enhancing hematogeneous tumor spread. Could be an adhesion molecule active in neural crest cells during embryonic development. Acts as a surface receptor that triggers tyrosine phosphorylation of FYN and PTK2/FAK1, and a transient increase in the intracellular calcium concentration. The chain is Cell surface glycoprotein MUC18 (Mcam) from Mus musculus (Mouse).